The primary structure comprises 140 residues: Ribonuclease P protein component (140 aa).

The protein belongs to the RnpA family. In terms of assembly, consists of a catalytic RNA component (M1 or rnpB) and a protein subunit.

It carries out the reaction Endonucleolytic cleavage of RNA, removing 5'-extranucleotides from tRNA precursor.. RNaseP catalyzes the removal of the 5'-leader sequence from pre-tRNA to produce the mature 5'-terminus. It can also cleave other RNA substrates such as 4.5S RNA. The protein component plays an auxiliary but essential role in vivo by binding to the 5'-leader sequence and broadening the substrate specificity of the ribozyme. This Nostoc sp. (strain PCC 7120 / SAG 25.82 / UTEX 2576) protein is Ribonuclease P protein component.